Reading from the N-terminus, the 178-residue chain is Actin-related protein 2/3 complex subunit 3 (178 aa).

Residue lysine 29 forms a Glycyl lysine isopeptide (Lys-Gly) (interchain with G-Cter in ubiquitin) linkage.

The protein belongs to the ARPC3 family. As to quaternary structure, component of the Arp2/3 complex composed of ARP2, ARP3, ARC40/p41-ARC, ARC35/p34-ARC, ARC18/p21-ARC, ARC19/p20-ARC and ARC16/p16-ARC.

It is found in the cytoplasm. The protein resides in the cytoskeleton. Functionally, functions as a component of the Arp2/3 complex which is involved in regulation of actin polymerization and together with an activating nucleation-promoting factor (NPF) mediates the formation of branched actin networks. This chain is Actin-related protein 2/3 complex subunit 3 (ARC18), found in Saccharomyces cerevisiae (strain ATCC 204508 / S288c) (Baker's yeast).